A 385-amino-acid polypeptide reads, in one-letter code: Circadian-associated transcriptional repressor (385 aa).

Residues 1–26 (MDSPSSVSSYSSYSLSSSFPTSPVNS) show a composition bias toward low complexity. 3 disordered regions span residues 1–108 (MDSP…SLNT), 203–233 (GGGKHQLTKHFPSHHSDSAASSPASPMEKMD), and 365–385 (GHREQQRSHPPVAADAHLLNL). The segment covering 33–45 (DSEREDKGAHGPR) has biased composition (basic and acidic residues). Positions 70–79 (VSGNQHTPSH) are enriched in polar residues.

In terms of assembly, interacts with PER2, CRY2, BHLHE41, HDAC1 and NR3C1. Interacts with BMAL1.

It is found in the nucleus. The protein resides in the PML body. Functionally, transcriptional repressor which forms a negative regulatory component of the circadian clock and acts independently of the circadian transcriptional repressors: CRY1, CRY2 and BHLHE41. In a histone deacetylase-dependent manner represses the transcriptional activator activity of the CLOCK-BMAL1 heterodimer. Abrogates the interaction of BMAL1 with the transcriptional coactivator CREBBP and can repress the histone acetyl-transferase activity of the CLOCK-BMAL1 heterodimer, reducing histone acetylation of its target genes. Rhythmically binds the E-box elements (5'-CACGTG-3') on circadian gene promoters and its occupancy shows circadian oscillation antiphasic to BMAL1. Interacts with the glucocorticoid receptor (NR3C1) and contributes to the repressive function in the glucocorticoid response. In Homo sapiens (Human), this protein is Circadian-associated transcriptional repressor (CIART).